Here is a 627-residue protein sequence, read N- to C-terminus: MDNFHLIKIIGEGTFGKVYLAKDKSESSHCVIKEISLTKEKEASKNEVILLARMEHPNIVTFFSSFQENGRLFIVMEYCDGGDLMQRIQRQRGVMFSEDQILCWFVQISLGLKHIHDRKILHRDIKSQNIFLSKNGMVAKLGDFGTARTLNDSMELAQTCAGTPYYLSPEICQNRPYNNKTDIWSLGCVLYELCTLKHPFESNNFHHLVLKICQGRVAPISPHFSRDLQSLIPQLFRVSPQDRPSVTSLLKRPFLETLIARSLYPEVCSRRIQSHAHMENMAIGPTACWRVSPWSAAYLQRKFEAQQYKLKVERQLGLRPSSVEPHPNEGEKLQSHWEETKFQELQYRKNKMKDQEYWKQLEEIRQQYHNDMKEIKKKMGRELKRVVKFEISLDKCISEEDTVQENEAVDKLNATLSFEDGTKFQEHRCKEEHEDYTDRAFEELCGPEAEGFFQDVIAAENRRQWDAGAPHTLLRIMAMADVTSTCPTMPDDGQVIVMEGSVENGKQWWLDVPGTPCALAAECACSGSLSASKGETVMIKPQLPKEDQEKVEIATGIMVDDEQLEPGSDEDDIKFEESEDELRSEIIESLEKLAASTEEAEQAPSSSKNAEEPGEKEKTNLPVKKLQ.

The Protein kinase domain occupies 4–255; the sequence is FHLIKIIGEG…VTSLLKRPFL (252 aa). Residues 10–18 and Lys33 contribute to the ATP site; that span reads IGEGTFGKV. The active-site Proton acceptor is the Asp124. Over residues 563–580 the composition is skewed to acidic residues; it reads QLEPGSDEDDIKFEESED. Disordered stretches follow at residues 563–582 and 591–627; these read QLEPGSDEDDIKFEESEDEL and EKLAASTEEAEQAPSSSKNAEEPGEKEKTNLPVKKLQ. The span at 609–619 shows a compositional bias: basic and acidic residues; it reads NAEEPGEKEKT.

It belongs to the protein kinase superfamily. NEK Ser/Thr protein kinase family. NIMA subfamily. It depends on Mg(2+) as a cofactor.

It localises to the cell projection. The protein localises to the cilium. It is found in the flagellum. It carries out the reaction L-seryl-[protein] + ATP = O-phospho-L-seryl-[protein] + ADP + H(+). The catalysed reaction is L-threonyl-[protein] + ATP = O-phospho-L-threonyl-[protein] + ADP + H(+). In Mus musculus (Mouse), this protein is Serine/threonine-protein kinase Nek5 (Nek5).